Here is a 279-residue protein sequence, read N- to C-terminus: Prostatic spermine-binding protein (279 aa).

An N-terminal signal peptide occupies residues 1-17 (MLLLVTLALLAGPTCRA). Q18 carries the post-translational modification Pyrrolidone carboxylic acid. One can recognise a Jacalin-type lectin domain in the interval 18-151 (QNILGNNVGT…LNGMGFKWKN (134 aa)). An N-linked (GlcNAc...) asparagine glycan is attached at N62. Acidic residues-rich tracts occupy residues 160–177 (DDDK…NEED) and 185–279 (NDHD…EEEE). The disordered stretch occupies residues 160 to 279 (DDDKEDDDDE…DDDNGDEEEE (120 aa)).

It to mouse SBP. As to expression, prostate.

In terms of biological role, spermine-binding protein is an androgen regulated ventral prostate glycoprotein that binds various polyamines. In Rattus norvegicus (Rat), this protein is Prostatic spermine-binding protein (Sbp).